The sequence spans 450 residues: Probable ECA polymerase (450 aa).

Helical transmembrane passes span 6–26 (FSGLFVVWLLCTLFIATLTWF), 37–57 (VFFSLLFLLTFFFGFPLTSVL), 63–83 (VGVAPPEILLQALLSAGCFYA), 118–138 (VILMGVALVSVGIFFMHNGFL), 155–175 (GVALKRFFYFFIPAMLVVYFL), 181–201 (AWLFFLVSTVAFGLLTYMIVG), 207–227 (IIIAFAIFLFIGIIRGWISLW), 228–248 (MLAAAGVLGIVGMFWLALKRY), 341–361 (LVVMGGALFIPLGAIVVGLII), 378–398 (YKAAILHSFCFGAIFNMIVLA), and 410–430 (VFFIVVFGACLMIAKLLYWLF).

Belongs to the WzyE family. Probably part of a complex composed of WzxE, WzyE and WzzE.

Its subcellular location is the cell inner membrane. It participates in bacterial outer membrane biogenesis; enterobacterial common antigen biosynthesis. In terms of biological role, probably involved in the polymerization of enterobacterial common antigen (ECA) trisaccharide repeat units. The chain is Probable ECA polymerase from Escherichia coli O17:K52:H18 (strain UMN026 / ExPEC).